The primary structure comprises 940 residues: Isoleucine--tRNA ligase (940 aa).

Residues 58–68 (PYANGSIHIGH) carry the 'HIGH' region motif. Residue E564 coordinates L-isoleucyl-5'-AMP. Positions 605–609 (KMSKS) match the 'KMSKS' region motif. K608 lines the ATP pocket. Zn(2+) is bound by residues C903, C906, C923, and C926.

Belongs to the class-I aminoacyl-tRNA synthetase family. IleS type 1 subfamily. As to quaternary structure, monomer. Zn(2+) serves as cofactor.

Its subcellular location is the cytoplasm. It catalyses the reaction tRNA(Ile) + L-isoleucine + ATP = L-isoleucyl-tRNA(Ile) + AMP + diphosphate. Its function is as follows. Catalyzes the attachment of isoleucine to tRNA(Ile). As IleRS can inadvertently accommodate and process structurally similar amino acids such as valine, to avoid such errors it has two additional distinct tRNA(Ile)-dependent editing activities. One activity is designated as 'pretransfer' editing and involves the hydrolysis of activated Val-AMP. The other activity is designated 'posttransfer' editing and involves deacylation of mischarged Val-tRNA(Ile). This Shewanella baltica (strain OS195) protein is Isoleucine--tRNA ligase.